The following is a 306-amino-acid chain: Serine/threonine-protein phosphatase PP2A-2 catalytic subunit (306 aa).

Residues Asp54, His56, Asp82, and Asn114 each coordinate Mn(2+). His115 functions as the Proton donor in the catalytic mechanism. Mn(2+) is bound by residues His164 and His238. Leucine methyl ester is present on Leu306.

Belongs to the PPP phosphatase family. PP-2A subfamily. As to quaternary structure, PP2A consists of a common heterodimeric core enzyme, composed of a 36 kDa catalytic subunit (subunit C) and a 65 kDa constant regulatory subunit (subunit A), that associates with a variety of regulatory subunits such as subunits B (the R2/B/PR55/B55, R3/B''/PR72/PR130/PR59 and R5/B'/B56 families). Interacts with B'THETA. Interacts with HDA14. Interacts with SRK2E/OST1. Interacts with TAP46. The cofactor is Mn(2+). In terms of processing, reversibly methyl esterified on Leu-306 by leucine carboxyl methyltransferase 1 (LCMT1) and pectin methylesterase 1 (PME1). Carboxyl methylation influences the affinity of the catalytic subunit for the different regulatory subunits, thereby modulating the PP2A holoenzyme's substrate specificity, enzyme activity and cellular localization. Post-translationally, phosphorylation of either threonine (by autophosphorylation-activated protein kinase) or tyrosine results in inactivation of the phosphatase. Auto-dephosphorylation has been suggested as a mechanism for reactivation. Expressed in root meristem, emerging lateral roots, leaf vasculature, stipules, guard cells, anthers and pollen grains.

It localises to the cytoplasm. The protein localises to the cytosol. Its subcellular location is the nucleus. It is found in the peroxisome. It catalyses the reaction O-phospho-L-seryl-[protein] + H2O = L-seryl-[protein] + phosphate. The enzyme catalyses O-phospho-L-threonyl-[protein] + H2O = L-threonyl-[protein] + phosphate. In terms of biological role, dephosphorylates and activates the actin-depolymerizing factor ADF1, which, in turn, regulates actin cytoskeleton remodeling and is involved in the blue light photoreceptor PHOT2-mediated chloroplast avoidance movements. Associates with the serine/threonine-protein phosphatase PP2A regulatory subunits A and B' to positively regulates beta-oxidation of fatty acids and protoauxins in peroxisomes by dephosphorylating peroxisomal beta-oxidation-related proteins. Acts as a negative regulator of abscisic acid (ABA) signaling. May regulate ABA-dependent gene expression. Involved in the light-dependent activation of nitrate reductase. This chain is Serine/threonine-protein phosphatase PP2A-2 catalytic subunit, found in Arabidopsis thaliana (Mouse-ear cress).